The sequence spans 587 residues: Tyrosine-protein kinase transforming protein Src (587 aa).

Residues 1 to 58 (MGSSKSKPKDPSQRRRSLEPPDSTHHGGFPASQTPNKTAAPDTHRTPSRSFGTVATEP) form a disordered region. Glycine 2 carries the N-myristoyl glycine; by host lipid modification. A compositionally biased stretch (basic and acidic residues) spans 7–25 (KPKDPSQRRRSLEPPDSTH). An SH3 domain is found at 81–142 (GGVTTFVALY…PSNYVAPSDS (62 aa)). An SH2 domain is found at 148–245 (WYFGKITRRE…GLCHRLTNVC (98 aa)). The region spanning 267–520 (LRLEVKLGQG…YLQAFLEDYF (254 aa)) is the Protein kinase domain. ATP is bound by residues 273 to 281 (LGQGCFGEV) and lysine 295. The active-site Proton acceptor is aspartate 386. Tyrosine 416 carries the phosphotyrosine; by autocatalysis modification.

Belongs to the protein kinase superfamily. Tyr protein kinase family. SRC subfamily. In terms of processing, the phosphorylated form is termed pp60v-src.

The enzyme catalyses L-tyrosyl-[protein] + ATP = O-phospho-L-tyrosyl-[protein] + ADP + H(+). This phosphoprotein, required for both the initiation and the maintenance of neoplastic transformation, is a protein kinase that catalyzes the phosphorylation of tyrosine residues in vitro. This is Tyrosine-protein kinase transforming protein Src (V-SRC) from Galliformes.